The following is a 106-amino-acid chain: Small ribosomal subunit protein uS10 (106 aa).

Belongs to the universal ribosomal protein uS10 family. In terms of assembly, part of the 30S ribosomal subunit.

In terms of biological role, involved in the binding of tRNA to the ribosomes. The chain is Small ribosomal subunit protein uS10 from Prochlorococcus marinus (strain MIT 9211).